We begin with the raw amino-acid sequence, 488 residues long: Glutamyl-tRNA(Gln) amidotransferase subunit B, mitochondrial (488 aa).

The protein belongs to the GatB/GatE family. GatB subfamily. As to quaternary structure, subunit of the heterotrimeric GatFAB amidotransferase (AdT) complex, composed of A, B and F subunits.

Its subcellular location is the mitochondrion. It carries out the reaction L-glutamyl-tRNA(Gln) + L-glutamine + ATP + H2O = L-glutaminyl-tRNA(Gln) + L-glutamate + ADP + phosphate + H(+). Allows the formation of correctly charged Gln-tRNA(Gln) through the transamidation of misacylated Glu-tRNA(Gln) in the mitochondria. The reaction takes place in the presence of glutamine and ATP through an activated gamma-phospho-Glu-tRNA(Gln). The polypeptide is Glutamyl-tRNA(Gln) amidotransferase subunit B, mitochondrial (Candida albicans (strain WO-1) (Yeast)).